Here is a 552-residue protein sequence, read N- to C-terminus: Cytochrome c oxidase subunit 1 (552 aa).

Residues 35 to 55 form a helical membrane-spanning segment; it reads VIGIQYLVTAFIFYLIGGLMA. A Fe(II)-heme a-binding site is contributed by His82. A run of 6 helical transmembrane segments spans residues 85 to 105, 120 to 140, 164 to 184, 211 to 231, 252 to 272, and 284 to 304; these read IMIFLWVVPAAIGGFGNYLVP, ALAFWLNPPAGALLLASFLFG, WILAIILVGTSSILGSVNFIV, LLALVSTPVLAAGLILLLFDI, LFWFYSHPAVYLMILPIFGIM, and IFGYQAIAYSSLAICCVGLFV. His258 and Tyr262 together coordinate Cu cation. A cross-link (1'-histidyl-3'-tyrosine (His-Tyr)) is located at residues 258 to 262; that stretch reads HPAVY. 2 residues coordinate Cu cation: His307 and His308. 5 helical membrane-spanning segments follow: residues 321–341, 355–375, 390–410, 426–446, and 470–490; these read FFTISTLIVAVPTGVKIFSWV, MLFAIGLMSMFVLGGLSGVTL, VVAHFHYVLFGGSVFGLYAGI, LGILHFVLTLIGTNWTFLPMH, and ICTIGAFVLAFSIIPFLINII. A heme a3-binding site is contributed by His393. His395 contacts Fe(II)-heme a.

This sequence belongs to the heme-copper respiratory oxidase family. Cu(2+) is required as a cofactor. Heme serves as cofactor.

The protein resides in the cell membrane. It carries out the reaction 4 Fe(II)-[cytochrome c] + O2 + 8 H(+)(in) = 4 Fe(III)-[cytochrome c] + 2 H2O + 4 H(+)(out). It participates in energy metabolism; oxidative phosphorylation. Its function is as follows. Cytochrome c oxidase is the component of the respiratory chain that catalyzes the reduction of oxygen to water. Subunits 1-3 form the functional core of the enzyme complex. CO I is the catalytic subunit of the enzyme. Electrons originating in cytochrome c are transferred via the copper A center of subunit 2 and heme A of subunit 1 to the bimetallic center formed by heme A3 and copper B. This Thermostichus vulcanus (Synechococcus vulcanus) protein is Cytochrome c oxidase subunit 1 (ctaD).